Reading from the N-terminus, the 492-residue chain is Ketol-acid reductoisomerase (NADP(+)) (492 aa).

One can recognise a KARI N-terminal Rossmann domain in the interval 14–208 (LDQLGKCRFM…GGHRAGVLQS (195 aa)). Residues 45 to 48 (CGAQ), arginine 68, arginine 76, serine 78, and 108 to 110 (DKQ) contribute to the NADP(+) site. Residue histidine 132 is part of the active site. NADP(+) is bound at residue glycine 158. KARI C-terminal knotted domains lie at 209–344 (SFVA…NAPQ) and 345–485 (FDGK…MKDM). Residues aspartate 217, glutamate 221, glutamate 389, and glutamate 393 each contribute to the Mg(2+) site. A substrate-binding site is contributed by serine 414.

This sequence belongs to the ketol-acid reductoisomerase family. It depends on Mg(2+) as a cofactor.

It carries out the reaction (2R)-2,3-dihydroxy-3-methylbutanoate + NADP(+) = (2S)-2-acetolactate + NADPH + H(+). It catalyses the reaction (2R,3R)-2,3-dihydroxy-3-methylpentanoate + NADP(+) = (S)-2-ethyl-2-hydroxy-3-oxobutanoate + NADPH + H(+). It functions in the pathway amino-acid biosynthesis; L-isoleucine biosynthesis; L-isoleucine from 2-oxobutanoate: step 2/4. It participates in amino-acid biosynthesis; L-valine biosynthesis; L-valine from pyruvate: step 2/4. In terms of biological role, involved in the biosynthesis of branched-chain amino acids (BCAA). Catalyzes an alkyl-migration followed by a ketol-acid reduction of (S)-2-acetolactate (S2AL) to yield (R)-2,3-dihydroxy-isovalerate. In the isomerase reaction, S2AL is rearranged via a Mg-dependent methyl migration to produce 3-hydroxy-3-methyl-2-ketobutyrate (HMKB). In the reductase reaction, this 2-ketoacid undergoes a metal-dependent reduction by NADPH to yield (R)-2,3-dihydroxy-isovalerate. This Pectobacterium carotovorum subsp. carotovorum (strain PC1) protein is Ketol-acid reductoisomerase (NADP(+)).